The sequence spans 194 residues: Cytochrome bo(3) ubiquinol oxidase subunit 3 (194 aa).

Over Met-1–Gly-18 the chain is Cytoplasmic. The chain crosses the membrane as a helical span at residues Phe-19–Val-41. The Extracellular portion of the chain corresponds to Asp-42–Gln-55. The helical transmembrane segment at Asn-56 to Phe-78 threads the bilayer. Topologically, residues Glu-79 to Asn-84 are cytoplasmic. A helical membrane pass occupies residues Leu-85–Leu-107. Residues Phe-108–Leu-126 lie on the Extracellular side of the membrane. A helical transmembrane segment spans residues Ser-127–Val-149. Topologically, residues Met-150–Cys-169 are cytoplasmic. Residues Leu-170–Gly-192 form a helical membrane-spanning segment. Residues Met-193–Val-194 are Extracellular-facing.

It belongs to the cytochrome c oxidase subunit 3 family. Heterooctamer of two A chains, two B chains, two C chains and two D chains.

It is found in the cell membrane. Its function is as follows. Cytochrome bo(3) ubiquinol terminal oxidase is the component of the aerobic respiratory chain of E.coli that predominates when cells are grown at high aeration. Has proton pump activity across the membrane in addition to electron transfer, pumping 2 protons/electron. The protein is Cytochrome bo(3) ubiquinol oxidase subunit 3 (cyoC) of Buchnera aphidicola subsp. Baizongia pistaciae (strain Bp).